A 329-amino-acid polypeptide reads, in one-letter code: Peroxidase 56 (329 aa).

Residues 1–31 (MAALKMTISCFLFLQVIYCLLSSFAPTNVQG) form the signal peptide. 4 cysteine pairs are disulfide-bonded: cysteine 41–cysteine 119, cysteine 74–cysteine 79, cysteine 125–cysteine 325, and cysteine 204–cysteine 236. The active-site Proton acceptor is the histidine 72. Ca(2+) is bound by residues aspartate 73, valine 76, glycine 78, glutamate 80, and serine 82. N-linked (GlcNAc...) asparagine glycosylation occurs at asparagine 158. Proline 167 is a binding site for substrate. A glycan (N-linked (GlcNAc...) asparagine) is linked at asparagine 172. Position 197 (histidine 197) interacts with heme b. Threonine 198 contributes to the Ca(2+) binding site. An N-linked (GlcNAc...) asparagine glycan is attached at asparagine 213. Ca(2+) contacts are provided by aspartate 248, serine 251, and aspartate 256.

It belongs to the peroxidase family. Classical plant (class III) peroxidase subfamily. Heme b serves as cofactor. It depends on Ca(2+) as a cofactor.

The protein localises to the secreted. The enzyme catalyses 2 a phenolic donor + H2O2 = 2 a phenolic radical donor + 2 H2O. Removal of H(2)O(2), oxidation of toxic reductants, biosynthesis and degradation of lignin, suberization, auxin catabolism, response to environmental stresses such as wounding, pathogen attack and oxidative stress. These functions might be dependent on each isozyme/isoform in each plant tissue. The polypeptide is Peroxidase 56 (PER56) (Arabidopsis thaliana (Mouse-ear cress)).